We begin with the raw amino-acid sequence, 490 residues long: Cobyric acid synthase (490 aa).

The GATase cobBQ-type domain maps to 252-439 (RLKVVVPVLP…LHGLFESTAA (188 aa)). The Nucleophile role is filled by C333. H431 is an active-site residue.

Belongs to the CobB/CobQ family. CobQ subfamily.

It participates in cofactor biosynthesis; adenosylcobalamin biosynthesis. Functionally, catalyzes amidations at positions B, D, E, and G on adenosylcobyrinic A,C-diamide. NH(2) groups are provided by glutamine, and one molecule of ATP is hydrogenolyzed for each amidation. This Pseudomonas aeruginosa (strain LESB58) protein is Cobyric acid synthase.